We begin with the raw amino-acid sequence, 697 residues long: Potassium-transporting ATPase ATP-binding subunit (697 aa).

The next 4 membrane-spanning stretches (helical) occupy residues 55 to 75 (PIMF…FLPS), 79 to 99 (SIPG…VLFA), 245 to 265 (LTLI…YLGF), and 271 to 291 (VLVA…LSAI). The active-site 4-aspartylphosphate intermediate is the Asp324. ATP-binding positions include Asp361, Glu365, 393–400 (FKAETRMS), and Lys412. Asp535 and Asp539 together coordinate Mg(2+). The next 3 helical transmembrane spans lie at 605–625 (FAII…LNIM), 633–653 (AILS…PLAM), and 677–697 (GGVI…GLFI).

It belongs to the cation transport ATPase (P-type) (TC 3.A.3) family. Type IA subfamily. As to quaternary structure, the system is composed of three essential subunits: KdpA, KdpB and KdpC.

It localises to the cell membrane. The enzyme catalyses K(+)(out) + ATP + H2O = K(+)(in) + ADP + phosphate + H(+). Functionally, part of the high-affinity ATP-driven potassium transport (or Kdp) system, which catalyzes the hydrolysis of ATP coupled with the electrogenic transport of potassium into the cytoplasm. This subunit is responsible for energy coupling to the transport system and for the release of the potassium ions to the cytoplasm. The chain is Potassium-transporting ATPase ATP-binding subunit from Bacillus cereus (strain G9842).